The sequence spans 100 residues: Small ribosomal subunit protein bS18 (100 aa).

Residues 1–23 are disordered; that stretch reads MTFIRKPAGQAKPQKYSTDAYGR.

This sequence belongs to the bacterial ribosomal protein bS18 family. As to quaternary structure, part of the 30S ribosomal subunit. Forms a tight heterodimer with protein bS6.

In terms of biological role, binds as a heterodimer with protein bS6 to the central domain of the 16S rRNA, where it helps stabilize the platform of the 30S subunit. This chain is Small ribosomal subunit protein bS18, found in Endomicrobium trichonymphae.